We begin with the raw amino-acid sequence, 180 residues long: Ribulose bisphosphate carboxylase small subunit, chloroplastic (180 aa).

The transit peptide at 1–56 (MASSVLSSAAVATRSNVAQANMVAPFTGLKSAASFPVSRKQNLDITSIASNGGRVQ) directs the protein to the chloroplast.

Belongs to the RuBisCO small chain family. In terms of assembly, heterohexadecamer of 8 large and 8 small subunits.

It is found in the plastid. The protein localises to the chloroplast. RuBisCO catalyzes two reactions: the carboxylation of D-ribulose 1,5-bisphosphate, the primary event in carbon dioxide fixation, as well as the oxidative fragmentation of the pentose substrate. Both reactions occur simultaneously and in competition at the same active site. Although the small subunit is not catalytic it is essential for maximal activity. In Nicotiana plumbaginifolia (Leadwort-leaved tobacco), this protein is Ribulose bisphosphate carboxylase small subunit, chloroplastic.